Consider the following 426-residue polypeptide: Ammonium transporter Rh type A (426 aa).

Topologically, residues 1-4 (MRFK) are cytoplasmic. The helical transmembrane segment at 5-25 (FPLMAIGLEVVMIVLFALFVQ) threads the bilayer. Residues 26–54 (YETSVNTSRNPNETESAAMDVEKTMESYP) lie on the Extracellular side of the membrane. Residues Asn-31 and Asn-37 are each glycosylated (N-linked (GlcNAc...) asparagine). A helical membrane pass occupies residues 55 to 75 (FFQDVHIMVFAGFGFLMTFLW). The Cytoplasmic segment spans residues 76–78 (KYG). Residues 79 to 99 (FSGVGINLLIAALGLQWGTII) form a helical membrane-spanning segment. Over 100 to 124 (QGIFRSHGQKFLIEMKNMIHADFST) the chain is Extracellular. Transmembrane regions (helical) follow at residues 125–145 (VTVL…QMLI) and 146–166 (MTIL…KILW). Over 167–170 (ASDT) the chain is Extracellular. The chain crosses the membrane as a helical span at residues 171–191 (GESMTIHAFGAYFGLAVAGIL). Residues 192–210 (YRSGLKEKHSNEESVYHSD) are Cytoplasmic-facing. The helical transmembrane segment at 211–231 (LFAMIGSLFLWIFWPSFNSAT) threads the bilayer. Residues 232 to 241 (ADEAKKQYRA) lie on the Extracellular side of the membrane. A helical membrane pass occupies residues 242–262 (IVNTYFSLAASVVTAYACSSL). Over 263–270 (LESRGKLN) the chain is Cytoplasmic. The chain crosses the membrane as a helical span at residues 271–288 (MVHIQNATLAGGVAVGTC). Residues 289-292 (ADME) are Extracellular-facing. Residues 293–313 (IPPYYAMIIGSIAGAVSVFGF) form a helical membrane-spanning segment. Residues 314–331 (KFLTPLFTTKLRIHDTCG) lie on the Cytoplasmic side of the membrane. The helical transmembrane segment at 332–352 (VHNLHGLPGVIGGLAGIITVA) threads the bilayer. At 353–371 (LEESDSTKTVSQAAALGSS) the chain is on the extracellular side. The chain crosses the membrane as a helical span at residues 372–392 (IATALVGGLITGAILKIPFWA). Residues 393–426 (QPPDEDCYDDSVYWEVPERKEYDNHFHELLSTLH) are Cytoplasmic-facing.

Belongs to the ammonium transporter (TC 2.A.49) family. Rh subfamily. Homodimer. Heterotrimer; a RHCE monomer interacts with a RHAG homodimer. Component of the ankyrin-1 complex in the erythrocyte, composed of ANK1, RHCE, RHAG, SLC4A1, EPB42, GYPA, GYPB and AQP1. Interacts with GYPB (via the N-terminal); this interaction bridges the (RHAG)2(RHCE) heterotrimer with the SLC4A1 Band 3 I dimer complexed with GYPA. Glycosylated.

It is found in the membrane. The enzyme catalyses methylamine(out) = methylamine(in). It catalyses the reaction NH4(+)(in) = NH4(+)(out). The catalysed reaction is CO2(out) = CO2(in). Its function is as follows. Component of the ankyrin-1 complex, a multiprotein complex involved in the stability and shape of the erythrocyte membrane. Heterotrimer with RHCE (RHAG)2(RHCE), that transports ammonium and its related derivative methylammonium, in both neutral and ionic forms, across the erythrocyte membrane. The transport of NH4(+) is electrogenic and masks the NH3 transport. Also, may act as a CO2 channel. Moreover in erythrocyte, regulates RHD membrane expression and is associated with rhesus blood group antigen expression. In Bos taurus (Bovine), this protein is Ammonium transporter Rh type A.